The following is a 157-amino-acid chain: MASKGVRLLLLLSWVAGPEVLSDILRPSCAPGWFYYRSHCYGYFRKLRNWSHAELECQSYGNGSHLASVLNQKEASVISKYITGYQRNLPVWIGLHDPQKKQLWQWTDGSTNLYRRWNPRTKSEARHCAEMNPKDKFLTWNKNGCANRQHFLCKYKT.

Positions 1–22 are cleaved as a signal peptide; it reads MASKGVRLLLLLSWVAGPEVLS. Cys29 and Cys40 are disulfide-bonded. One can recognise a C-type lectin domain in the interval 36 to 154; the sequence is YRSHCYGYFR…CANRQHFLCK (119 aa). 2 N-linked (GlcNAc...) asparagine glycosylation sites follow: Asn49 and Asn62. 2 disulfide bridges follow: Cys57–Cys153 and Cys128–Cys145. A carbohydrate-binding positions include 97-102 and 134-136; these read DPQKKQ and KDK.

Its subcellular location is the secreted. Its function is as follows. Calcium-independent lectin displaying mannose-binding specificity and able to maintain carbohydrate recognition activity in an acidic environment. May be involved in inflammatory and metaplastic responses of the gastrointestinal epithelium. This is Regenerating islet-derived protein 4 (Reg4) from Mus musculus (Mouse).